Consider the following 250-residue polypeptide: Cysteine proteinase inhibitor 12 (250 aa).

The signal sequence occupies residues 1-32 (MRVAATTRPASSSAAAPLPLFLLLAVAAAAAA). Cystatin domains lie at 49-137 (GGAH…RNTG) and 156-202 (PGWR…AEVV). The Secondary area of contact signature appears at 93–97 (QVVAG).

This sequence belongs to the cystatin family. Phytocystatin subfamily.

It is found in the secreted. In terms of biological role, specific inhibitor of cysteine proteinases. Probably involved in the regulation of endogenous processes and in defense against pests and pathogens. This Oryza sativa subsp. japonica (Rice) protein is Cysteine proteinase inhibitor 12.